Here is a 267-residue protein sequence, read N- to C-terminus: Small ribosomal subunit protein uS3 (267 aa).

Residues 43–111 enclose the KH type-2 domain; sequence IRKEMSKDLE…QVQLNIFEVK (69 aa). The interval 216–267 is disordered; the sequence is FEEQQAQQNNRPGRRGGDRRPRRGNRSAAPQAAEAPKAEAPAEAAPAAETKE. The segment covering 241 to 267 has biased composition (low complexity); sequence RSAAPQAAEAPKAEAPAEAAPAAETKE.

The protein belongs to the universal ribosomal protein uS3 family. In terms of assembly, part of the 30S ribosomal subunit. Forms a tight complex with proteins S10 and S14.

In terms of biological role, binds the lower part of the 30S subunit head. Binds mRNA in the 70S ribosome, positioning it for translation. The chain is Small ribosomal subunit protein uS3 from Bifidobacterium longum subsp. infantis (strain ATCC 15697 / DSM 20088 / JCM 1222 / NCTC 11817 / S12).